The sequence spans 714 residues: Fatty acid oxidation complex subunit alpha (714 aa).

Residues 1-190 (MEMTSAFTLN…KLGLVDDVVP (190 aa)) form an enoyl-CoA hydratase region. A 3-hydroxyacyl-CoA dehydrogenase region spans residues 306-714 (APLNSVGILG…FWKTTATDLQ (409 aa)).

The protein in the N-terminal section; belongs to the enoyl-CoA hydratase/isomerase family. This sequence in the central section; belongs to the 3-hydroxyacyl-CoA dehydrogenase family. Heterotetramer of two alpha chains (FadJ) and two beta chains (FadI).

The protein resides in the cytoplasm. The enzyme catalyses a (3S)-3-hydroxyacyl-CoA = a (2E)-enoyl-CoA + H2O. It catalyses the reaction a 4-saturated-(3S)-3-hydroxyacyl-CoA = a (3E)-enoyl-CoA + H2O. The catalysed reaction is a (3S)-3-hydroxyacyl-CoA + NAD(+) = a 3-oxoacyl-CoA + NADH + H(+). It carries out the reaction (3S)-3-hydroxybutanoyl-CoA = (3R)-3-hydroxybutanoyl-CoA. It participates in lipid metabolism; fatty acid beta-oxidation. Catalyzes the formation of a hydroxyacyl-CoA by addition of water on enoyl-CoA. Also exhibits 3-hydroxyacyl-CoA epimerase and 3-hydroxyacyl-CoA dehydrogenase activities. This is Fatty acid oxidation complex subunit alpha from Escherichia coli O8 (strain IAI1).